The primary structure comprises 567 residues: Potassium-transporting ATPase potassium-binding subunit (567 aa).

A run of 12 helical transmembrane segments spans residues 3–23 (MIGWLQIILFCVIIVALTKPL), 64–84 (LTYTVAMLLFHVGGFLVIYGV), 136–156 (GLTHQNFLSAATGIALAMALI), 179–199 (LYVLLPICVVYTLFLVWQGIP), 220–240 (VGPVASQVAIKMLGTNGGGFF), 254–274 (LSNFVQMLSIFALGAALTNVF), 285–305 (WAILAVMGVLFVAGVAVTYWA), 330–350 (FGLVASSLFAVITTAASCGAV), 374–394 (IIVGGVGAGLYGMLLFVVLAI), 420–440 (AMLAILVLPLMYLGWTAVGVV), 488–508 (LASAMFVGRFFMIVPAMAIAG), and 527–547 (GGLFVGLVVGVILIIGGLTFF).

It belongs to the KdpA family. The system is composed of three essential subunits: KdpA, KdpB and KdpC.

The protein localises to the cell inner membrane. Functionally, part of the high-affinity ATP-driven potassium transport (or Kdp) system, which catalyzes the hydrolysis of ATP coupled with the electrogenic transport of potassium into the cytoplasm. This subunit binds the periplasmic potassium ions and delivers the ions to the membrane domain of KdpB through an intramembrane tunnel. This is Potassium-transporting ATPase potassium-binding subunit from Bradyrhizobium diazoefficiens (strain JCM 10833 / BCRC 13528 / IAM 13628 / NBRC 14792 / USDA 110).